Consider the following 252-residue polypeptide: CLAVATA3/ESR (CLE)-related protein 4A-1 (252 aa).

The signal sequence occupies residues 1–21 (MAKNAMLCLLILRVVLALAFA). Positions 21–83 (ATNKKGDEEP…SNQLPNNNWM (63 aa)) are required for secretion from the host cytoplasm to the host apoplasm. Residue N32 is glycosylated (N-linked (GlcNAc...) asparagine). The interval 116 to 252 (RKTGMHSQRH…APAGPDPIHH (137 aa)) is disordered. 2 stretches are compositionally biased toward basic and acidic residues: residues 125–137 (HHEE…EKRV) and 144–242 (PIHH…EKRG). Residues 127 to 135 (EETTLEQEK) form an A-1 repeat. The tract at residues 127-219 (EETTLEQEKR…HEETTLEQEK (93 aa)) is 6 X approximate repeat A. The CLE-1 repeat unit spans residues 136 to 147 (RVAGAGPDPIHH). The segment at 136 to 252 (RVAGAGPDPI…APAGPDPIHH (117 aa)) is 6 X approximate repeat CLE. An A-2 repeat occupies 148–156 (QDTTLEQEK). The stretch at 157–168 (RAVPAGPDPKHH) is one CLE-2 repeat. The A-3 repeat unit spans residues 169–177 (EETTLEQEK). The stretch at 178–189 (RAVPAGPDPKHH) is one CLE-3 repeat. One copy of the A-4 repeat lies at 190–198 (EETTLEQEK). A CLE-4 repeat occupies 199 to 210 (RAVPAGPDPKHH). An A-5 repeat occupies 211–219 (EETTLEQEK). One copy of the CLE-5 repeat lies at 220-231 (RAVPAGPDPKHH). The A-6 repeat unit spans residues 232–240 (EETTFEQEK). A CLE-6 repeat occupies 241–252 (RGAPAGPDPIHH).

Belongs to the CLV3/ESR signal peptide family. As to expression, highly expressed exclusively within the dorsal esophageal gland cell during syncytium formation in host plants.

The protein localises to the secreted. Its subcellular location is the host cytoplasm. The protein resides in the host extracellular space. It localises to the extracellular space. It is found in the apoplast. Functionally, mimics host plant CLE extracellular signal peptides that regulate cell fate. May play a role in the differentiation or division of feeding cells (syncytia) induced in plant roots during infection. In Globodera rostochiensis (Golden nematode worm), this protein is CLAVATA3/ESR (CLE)-related protein 4A-1 (CLE-4A-1).